The following is a 382-amino-acid chain: B3 domain-containing protein Os03g0622100 (382 aa).

The segment at residues cysteine 29–serine 123 is a DNA-binding region (TF-B3 1). 2 stretches are compositionally biased toward basic and acidic residues: residues arginine 136–glycine 158 and glutamine 193–glycine 202. Positions arginine 136–arginine 222 are disordered. Over residues aspartate 203–aspartate 218 the composition is skewed to acidic residues. The segment at residues lysine 261–arginine 363 is a DNA-binding region (TF-B3 2).

Its subcellular location is the nucleus. The protein is B3 domain-containing protein Os03g0622100 of Oryza sativa subsp. japonica (Rice).